Consider the following 633-residue polypeptide: tRNA uridine 5-carboxymethylaminomethyl modification enzyme MnmG (633 aa).

Residue 13 to 18 (GGGHAG) participates in FAD binding. 273 to 287 (GPRYCPSIEDKINRF) serves as a coordination point for NAD(+).

It belongs to the MnmG family. As to quaternary structure, homodimer. Heterotetramer of two MnmE and two MnmG subunits. Requires FAD as cofactor.

The protein resides in the cytoplasm. In terms of biological role, NAD-binding protein involved in the addition of a carboxymethylaminomethyl (cmnm) group at the wobble position (U34) of certain tRNAs, forming tRNA-cmnm(5)s(2)U34. This Pseudoalteromonas atlantica (strain T6c / ATCC BAA-1087) protein is tRNA uridine 5-carboxymethylaminomethyl modification enzyme MnmG.